The following is a 263-amino-acid chain: Imidazole glycerol phosphate synthase subunit HisF (263 aa).

Active-site residues include Asp11 and Asp130.

The protein belongs to the HisA/HisF family. In terms of assembly, heterodimer of HisH and HisF.

The protein resides in the cytoplasm. The enzyme catalyses 5-[(5-phospho-1-deoxy-D-ribulos-1-ylimino)methylamino]-1-(5-phospho-beta-D-ribosyl)imidazole-4-carboxamide + L-glutamine = D-erythro-1-(imidazol-4-yl)glycerol 3-phosphate + 5-amino-1-(5-phospho-beta-D-ribosyl)imidazole-4-carboxamide + L-glutamate + H(+). It functions in the pathway amino-acid biosynthesis; L-histidine biosynthesis; L-histidine from 5-phospho-alpha-D-ribose 1-diphosphate: step 5/9. Functionally, IGPS catalyzes the conversion of PRFAR and glutamine to IGP, AICAR and glutamate. The HisF subunit catalyzes the cyclization activity that produces IGP and AICAR from PRFAR using the ammonia provided by the HisH subunit. The sequence is that of Imidazole glycerol phosphate synthase subunit HisF from Synechococcus sp. (strain CC9311).